Consider the following 256-residue polypeptide: Ribonuclease 3-like protein 1 (256 aa).

Residues 22–168 form the RNase III domain; the sequence is AEVERALGGY…IVGAVYLDSK (147 aa). The Mg(2+) site is built by Glu65, Asp154, and Glu157.

The cofactor is Mg(2+). It depends on Mn(2+) as a cofactor.

In terms of biological role, cleaves double-stranded RNA (dsRNA). This Oryza sativa subsp. japonica (Rice) protein is Ribonuclease 3-like protein 1.